The sequence spans 195 residues: Imidazoleglycerol-phosphate dehydratase (195 aa).

The protein belongs to the imidazoleglycerol-phosphate dehydratase family.

It is found in the cytoplasm. The catalysed reaction is D-erythro-1-(imidazol-4-yl)glycerol 3-phosphate = 3-(imidazol-4-yl)-2-oxopropyl phosphate + H2O. Its pathway is amino-acid biosynthesis; L-histidine biosynthesis; L-histidine from 5-phospho-alpha-D-ribose 1-diphosphate: step 6/9. The protein is Imidazoleglycerol-phosphate dehydratase of Burkholderia vietnamiensis (strain G4 / LMG 22486) (Burkholderia cepacia (strain R1808)).